The sequence spans 289 residues: Heme oxygenase 1 (289 aa).

At methionine 1–threonine 266 the chain is on the cytoplasmic side. Positions 18, 25, 134, and 183 each coordinate heme b. Residues histidine 225–threonine 261 form a disordered region. Phosphoserine occurs at positions 229 and 242. Residues valine 244–threonine 261 show a composition bias toward polar residues. Residues proline 267–methionine 289 traverse the membrane as a helical; Anchor for type IV membrane protein segment.

Belongs to the heme oxygenase family. As to quaternary structure, homodimer and higher order homooligomer. Oligomerization is crucial for its stability and function in the endoplasmic reticulum. Interacts with FLVCR2; this interaction is potentiated in the presence of heme. In terms of processing, a soluble form arises by proteolytic removal of the membrane anchor.

The protein localises to the endoplasmic reticulum membrane. It catalyses the reaction heme b + 3 reduced [NADPH--hemoprotein reductase] + 3 O2 = biliverdin IXalpha + CO + Fe(2+) + 3 oxidized [NADPH--hemoprotein reductase] + 3 H2O + H(+). With respect to regulation, inhibited by metalloporphyrins such as Sn- and Zn-protoporphyrins. Functionally, catalyzes the oxidative cleavage of heme at the alpha-methene bridge carbon, released as carbon monoxide (CO), to generate biliverdin IXalpha, while releasing the central heme iron chelate as ferrous iron. Affords protection against programmed cell death and this cytoprotective effect relies on its ability to catabolize free heme and prevent it from sensitizing cells to undergo apoptosis. Catalyzes the oxidative cleavage of heme at the alpha-methene bridge carbon, released as carbon monoxide (CO), to generate biliverdin IXalpha, while releasing the central heme iron chelate as ferrous iron. The protein is Heme oxygenase 1 (Hmox1) of Rattus norvegicus (Rat).